The following is a 161-amino-acid chain: RNA pyrophosphohydrolase (161 aa).

The Nudix hydrolase domain occupies 12–154 (PYRPGVGMMI…KRKLYQAVVK (143 aa)). The short motif at 46–67 (GGIVPGETPSIAAMREMLEEIG) is the Nudix box element.

It belongs to the Nudix hydrolase family. RppH subfamily. A divalent metal cation serves as cofactor.

Its function is as follows. Accelerates the degradation of transcripts by removing pyrophosphate from the 5'-end of triphosphorylated RNA, leading to a more labile monophosphorylated state that can stimulate subsequent ribonuclease cleavage. This Rickettsia rickettsii (strain Iowa) protein is RNA pyrophosphohydrolase.